A 142-amino-acid polypeptide reads, in one-letter code: Large ribosomal subunit protein uL11 (142 aa).

This sequence belongs to the universal ribosomal protein uL11 family. As to quaternary structure, part of the ribosomal stalk of the 50S ribosomal subunit. Interacts with L10 and the large rRNA to form the base of the stalk. L10 forms an elongated spine to which L12 dimers bind in a sequential fashion forming a multimeric L10(L12)X complex. In terms of processing, one or more lysine residues are methylated.

Its function is as follows. Forms part of the ribosomal stalk which helps the ribosome interact with GTP-bound translation factors. The protein is Large ribosomal subunit protein uL11 of Thermobifida fusca (strain YX).